A 379-amino-acid polypeptide reads, in one-letter code: Cytochrome b (379 aa).

Helical transmembrane passes span 33-53, 77-98, 113-133, and 178-198; these read FGSLLGMCLVIQILTGLFLAM, WLIRYLHANGASMFFICLFIHV, WNIGIILLLTTMATAFVGYVL, and FFAFHFILPFIIAAFALVHLL. Heme b-binding residues include His83 and His97. Heme b is bound by residues His182 and His196. Residue His201 coordinates a ubiquinone. 4 helical membrane passes run 226-246, 288-308, 320-340, and 347-367; these read TKDLLGIFLLLLVLMILALFF, LGGVLALVLSILILATFPLLN, VTQVIYWIFIANLLVLTWIGG, and FTTIGQIASITYFAIIIILIP.

It belongs to the cytochrome b family. The cytochrome bc1 complex contains 11 subunits: 3 respiratory subunits (MT-CYB, CYC1 and UQCRFS1), 2 core proteins (UQCRC1 and UQCRC2) and 6 low-molecular weight proteins (UQCRH/QCR6, UQCRB/QCR7, UQCRQ/QCR8, UQCR10/QCR9, UQCR11/QCR10 and a cleavage product of UQCRFS1). This cytochrome bc1 complex then forms a dimer. It depends on heme b as a cofactor.

The protein localises to the mitochondrion inner membrane. Functionally, component of the ubiquinol-cytochrome c reductase complex (complex III or cytochrome b-c1 complex) that is part of the mitochondrial respiratory chain. The b-c1 complex mediates electron transfer from ubiquinol to cytochrome c. Contributes to the generation of a proton gradient across the mitochondrial membrane that is then used for ATP synthesis. This chain is Cytochrome b (MT-CYB), found in Akodon paranaensis (Parana grass mouse).